Here is a 159-residue protein sequence, read N- to C-terminus: Phosphopantetheine adenylyltransferase (159 aa).

Thr-10 is a substrate binding site. Residues 10–11 and His-18 contribute to the ATP site; that span reads TF. Substrate contacts are provided by Lys-42, Met-74, and Arg-88. ATP contacts are provided by residues 89–91, Glu-99, and 124–130; these read GLR and WSFISSS.

The protein belongs to the bacterial CoaD family. Homohexamer. Mg(2+) is required as a cofactor.

It localises to the cytoplasm. It catalyses the reaction (R)-4'-phosphopantetheine + ATP + H(+) = 3'-dephospho-CoA + diphosphate. Its pathway is cofactor biosynthesis; coenzyme A biosynthesis; CoA from (R)-pantothenate: step 4/5. Functionally, reversibly transfers an adenylyl group from ATP to 4'-phosphopantetheine, yielding dephospho-CoA (dPCoA) and pyrophosphate. This Cronobacter sakazakii (strain ATCC BAA-894) (Enterobacter sakazakii) protein is Phosphopantetheine adenylyltransferase.